A 426-amino-acid chain; its full sequence is LIM/homeobox protein Lhx2 (426 aa).

The span at 14–24 shows a compositional bias: basic and acidic residues; the sequence is VIDEMDRRQER. The interval 14–42 is disordered; the sequence is VIDEMDRRQERGSGISSAIDRGDTETTMP. LIM zinc-binding domains lie at 52–104 and 114–167; these read CAGC…CKED and CARC…CRLH. The interval 248-268 is disordered; the sequence is DAEHLDRDQPYPSSQKTKRMR. A DNA-binding region (homeobox) is located at residues 264–323; the sequence is TKRMRTSFKHHQLRTMKSYFAINHNPDAKDLKQLAQKTGLTKRVLQVWFQNARAKFRRNL. Positions 305–321 match the Nuclear localization signal motif; the sequence is KRVLQVWFQNARAKFRR. Residues 326–354 show a composition bias toward polar residues; that stretch reads QENTGVDKTSDATLQTGTPSGPASELSNA. A disordered region spans residues 326-370; that stretch reads QENTGVDKTSDATLQTGTPSGPASELSNASLSPSSTPTTLTDLTS. Low complexity predominate over residues 355-370; the sequence is SLSPSSTPTTLTDLTS.

Interacts (via LIM domains) with CITED2. Interacts with POU4F2. Found in discrete regions of the developing CNS, primarily in diencephalic and telencephalic structures and a subset of lymphoid tissues. Also found in embryonic spinal cord and fetal liver.

The protein localises to the nucleus. In terms of biological role, acts as a transcriptional activator. Stimulates the promoter of the alpha-glycoprotein gene. Transcriptional regulatory protein involved in the control of cell differentiation in developing lymphoid and neural cell types. The sequence is that of LIM/homeobox protein Lhx2 (Lhx2) from Rattus norvegicus (Rat).